A 251-amino-acid chain; its full sequence is Putative deaminase AgaI (251 aa).

The active-site Proton acceptor; for enolization step is the Asp-86. The For ring-opening step role is filled by Asn-154. His-156 (proton acceptor; for ring-opening step) is an active-site residue. Glu-161 functions as the For ring-opening step in the catalytic mechanism.

This sequence belongs to the glucosamine/galactosamine-6-phosphate isomerase family.

This is Putative deaminase AgaI (agaI) from Escherichia coli (strain K12).